A 179-amino-acid chain; its full sequence is UPF0227 protein Shew185_2404 (179 aa).

It belongs to the UPF0227 family.

This chain is UPF0227 protein Shew185_2404, found in Shewanella baltica (strain OS185).